We begin with the raw amino-acid sequence, 237 residues long: Class B acid phosphatase (237 aa).

The N-terminal stretch at Met-1 to Ala-23 is a signal peptide. The active-site Nucleophile is Asp-69. The Mg(2+) site is built by Asp-69 and Asp-71. The active-site Proton donor is Asp-71. Substrate-binding positions include Thr-137–Gly-138 and Lys-177. Asp-192 is a binding site for Mg(2+).

This sequence belongs to the class B bacterial acid phosphatase family. In terms of assembly, homotetramer. Requires Mg(2+) as cofactor.

It localises to the periplasm. It catalyses the reaction a phosphate monoester + H2O = an alcohol + phosphate. With respect to regulation, nucleosides, and particularly 2'-deoxyribonucleosides, are potent inhibitors of the phosphatase activity. The phosphatase activity is also inhibited by inorganic phosphate and EDTA in vitro. In terms of biological role, dephosphorylates several organic phosphate monoesters such as 3'-UMP, 5'-UMP and pNPP. Also has a phosphotransferase activity catalyzing the transfer of low-energy phosphate groups from organic phosphate monoesters to free hydroxyl groups of various organic compounds such as the 2'-, 3-, or 5'-hydroxyls of nucleosides and nucleotides. Also displays significant phosphomutase activity since it is able to catalyze the transfer of the phosphate group of 3'-AMP from the 3'-position both to the 2'- and 5'-positions. One of the physiological functions of the phosphohydrolytic activity of the enzyme is believed to be the scavenging of organic phosphate esters that otherwise cannot pass the cytoplasmic membrane. The polypeptide is Class B acid phosphatase (aphA) (Salmonella typhimurium (strain LT2 / SGSC1412 / ATCC 700720)).